The following is an 880-amino-acid chain: DNA-directed RNA polymerase subunit beta C-terminal section (880 aa).

This sequence belongs to the RNA polymerase beta chain family. As to quaternary structure, in plastids the minimal PEP RNA polymerase catalytic core is composed of four subunits: alpha, beta, beta', and beta''. When a (nuclear-encoded) sigma factor is associated with the core the holoenzyme is formed, which can initiate transcription.

The protein localises to the plastid. The protein resides in the chloroplast. The catalysed reaction is RNA(n) + a ribonucleoside 5'-triphosphate = RNA(n+1) + diphosphate. Functionally, DNA-dependent RNA polymerase catalyzes the transcription of DNA into RNA using the four ribonucleoside triphosphates as substrates. This is DNA-directed RNA polymerase subunit beta C-terminal section (rpoB2) from Pleurastrum terricola (Filamentous green alga).